The sequence spans 100 residues: Coiled-coil domain-containing protein 167 (100 aa).

The stretch at 14 to 81 (VASEIDRVEE…VLRGENRRNM (68 aa)) forms a coiled coil. A helical transmembrane segment spans residues 82–99 (MLSVALLAISALFYYTFI).

The protein localises to the membrane. The chain is Coiled-coil domain-containing protein 167 (ccdc167) from Danio rerio (Zebrafish).